The chain runs to 190 residues: Lipid A acyltransferase PagP (190 aa).

The N-terminal stretch at 1 to 24 (MNRYLLTTLSAPLLALFFSFSLQA) is a signal peptide. Residues His62, Asp105, and Ser106 contribute to the active site.

It belongs to the lipid A palmitoyltransferase family. As to quaternary structure, homodimer.

The protein resides in the cell outer membrane. The catalysed reaction is a lipid A + a 1,2-diacyl-sn-glycero-3-phosphocholine = a hepta-acyl lipid A + a 2-acyl-sn-glycero-3-phosphocholine. The enzyme catalyses a lipid IVA + a 1,2-diacyl-sn-glycero-3-phosphocholine = a lipid IVB + a 2-acyl-sn-glycero-3-phosphocholine. It carries out the reaction a lipid IIA + a 1,2-diacyl-sn-glycero-3-phosphocholine = a lipid IIB + a 2-acyl-sn-glycero-3-phosphocholine. In terms of biological role, transfers a fatty acid residue from the sn-1 position of a phospholipid to the N-linked hydroxyfatty acid chain on the proximal unit of lipid A or its precursors. The protein is Lipid A acyltransferase PagP of Pantoea ananatis (strain LMG 20103).